The following is a 177-amino-acid chain: Inorganic pyrophosphatase (177 aa).

3 residues coordinate substrate: K31, R45, and Y57. Residues D67, D72, and D104 each contribute to the Mg(2+) site. Position 142 (Y142) interacts with substrate.

The protein belongs to the PPase family. As to quaternary structure, homohexamer. The cofactor is Mg(2+).

Its subcellular location is the cytoplasm. The catalysed reaction is diphosphate + H2O = 2 phosphate + H(+). Catalyzes the hydrolysis of inorganic pyrophosphate (PPi) forming two phosphate ions. The chain is Inorganic pyrophosphatase from Neisseria meningitidis serogroup A / serotype 4A (strain DSM 15465 / Z2491).